Reading from the N-terminus, the 272-residue chain is uncharacterized protein (272 aa).

The segment at 193–250 (AFLLPNNSKGVEKSEENEDGVTDNDSSNVNSSTNESPNPTDINVCSNDDATDNTENNL) is disordered. The span at 215-233 (DNDSSNVNSSTNESPNPTD) shows a compositional bias: low complexity. Residues 235–248 (NVCSNDDATDNTEN) are compositionally biased toward polar residues.

It belongs to the pal1 family.

It is found in the cytoplasm. The protein resides in the nucleus. This is an uncharacterized protein from Schizosaccharomyces pombe (strain 972 / ATCC 24843) (Fission yeast).